Reading from the N-terminus, the 373-residue chain is MTTSASSHLNKGIKQVYMSLPQGEKVQAMYIWIDGTGEGLRCKTRTLDSEPKCVEELPEWNFDGSSTLQSEGSNSDMYLVPAAMFRDPFRKDPNKLVLCEVFKYNRRPAETNLRHTCKRIMDMVSNQHPWFGMEQEYTLMGTDGHPFGWPSNGFPGPQGPYYCGVGADRAYGRDIVEAHYRACLYAGVKIAGTNAEVMPAQWEFQIGPCEGISMGDHLWVARFILHRVCEDFGVIATFDPKPIPGNWNGAGCHTNFSTKAMREENGLKYIEEAIEKLSKRHQYHIRAYDPKGGLDNARRLTGFHETSNINDFSAGVANRSASIRIPRTVGQEKKGYFEDRRPSANCDPFSVTEALIRTCLLNETGDEPFQYKN.

Thr2 is subject to N-acetylthreonine. A required for glutamine-induced ubiquitination by CRL4(CRBN) and proteasomal degradation region spans residues Thr2–Lys25. N6-acetyllysine; by EP300 is present on residues Lys11 and Lys14. In terms of domain architecture, GS beta-grasp spans Glu24–Arg106. Phosphotyrosine is present on Tyr104. One can recognise a GS catalytic domain in the interval Leu113–Asn373. ATP is bound at residue Glu134. Residues Glu134, Glu136, Glu196, and Glu203 each coordinate Mn(2+). Glu203 to Pro208 is an ATP binding site. Asn246–Trp247 is an L-glutamate binding site. His253 is a Mn(2+) binding site. Residues Asn255–Ser257, Arg319, and Arg324 each bind ATP. Arg319 contacts L-glutamate. Tyr336–Glu338 provides a ligand contact to ADP. Residue Glu338 coordinates Mn(2+). Arg340 serves as a coordination point for L-glutamate. Phosphoserine is present on Ser343.

The protein belongs to the glutamine synthetase family. Decamer; composed of two pentamers. Interacts with PALMD. Interacts with RHOJ. Interacts with BEST2; this interaction tethers a fraction of GLUL to the membrane, causing a decrease of cytosolic glutamine synthase (GS) activity and inhibits the chloride channel activity of BEST2 by affecting the gating at the aperture in the absence of intracellular glutamate. Mg(2+) serves as cofactor. Mn(2+) is required as a cofactor. Acetylated by EP300/p300; acetylation is stimulated by increased glutamine levels and promotes ubiquitin-mediated proteasomal degradation. Post-translationally, palmitoylated; undergoes autopalmitoylation. In terms of processing, ubiquitinated by ZNRF1. Ubiquitinated by the DCX (DDB1-CUL4-X-box) E3 ubiquitin-protein ligase complex called CRL4(CRBN), leading to proteasomal degradation. In terms of tissue distribution, expressed in endothelial cells.

It localises to the cytoplasm. It is found in the cytosol. Its subcellular location is the microsome. The protein resides in the mitochondrion. The protein localises to the cell membrane. The catalysed reaction is L-glutamate + NH4(+) + ATP = L-glutamine + ADP + phosphate + H(+). It carries out the reaction L-cysteinyl-[protein] + hexadecanoyl-CoA = S-hexadecanoyl-L-cysteinyl-[protein] + CoA. Glutamine synthetase activity is inhibited by methionine sulfoximine (MSO). Functionally, glutamine synthetase that catalyzes the ATP-dependent conversion of glutamate and ammonia to glutamine. Its role depends on tissue localization: in the brain, it regulates the levels of toxic ammonia and converts neurotoxic glutamate to harmless glutamine, whereas in the liver, it is one of the enzymes responsible for the removal of ammonia. Plays a key role in ammonium detoxification during erythropoiesis: the glutamine synthetase activity is required to remove ammonium generated by porphobilinogen deaminase (HMBS) during heme biosynthesis to prevent ammonium accumulation and oxidative stress. Essential for proliferation of fetal skin fibroblasts. Independently of its glutamine synthetase activity, required for endothelial cell migration during vascular development: acts by regulating membrane localization and activation of the GTPase RHOJ, possibly by promoting RHOJ palmitoylation. May act as a palmitoyltransferase for RHOJ: able to autopalmitoylate and then transfer the palmitoyl group to RHOJ. Plays a role in ribosomal 40S subunit biogenesis. Through the interaction with BEST2, inhibits BEST2 channel activity by affecting the gating at the aperture in the absence of intracellular L-glutamate, but sensitizes BEST2 to intracellular L-glutamate, which promotes the opening of BEST2 and thus relieves its inhibitory effect on BEST2. This is Glutamine synthetase from Homo sapiens (Human).